Consider the following 546-residue polypeptide: (-)-5-epieremophilene synthase STPS2 (546 aa).

Mg(2+)-binding residues include D299, D303, D442, T446, and E450. The short motif at 299 to 303 (DDTYD) is the DDXXD motif element.

This sequence belongs to the terpene synthase family. Tpsa subfamily. Monomer. Requires Mg(2+) as cofactor. As to expression, highly expressed in leaves. Expressed at levels in flowers.

It carries out the reaction (2E,6E)-farnesyl diphosphate = (-)-5-epi-eremophilene + diphosphate. Its pathway is secondary metabolite biosynthesis; terpenoid biosynthesis. Sesquiterpene synthase that catalyzes the conversion of farnesyl diphosphate to (-)-5-epi-eremophilene. This is (-)-5-epieremophilene synthase STPS2 from Salvia miltiorrhiza (Chinese sage).